A 450-amino-acid polypeptide reads, in one-letter code: Tubulin alpha chain (450 aa).

Gln-11 contributes to the GTP binding site. Lys-40 bears the N6-acetyllysine mark. Residues Glu-71, Ser-140, Gly-144, Thr-145, Thr-179, Asn-206, and Asn-228 each contribute to the GTP site. Glu-71 lines the Mg(2+) pocket. Glu-254 is an active-site residue.

The protein belongs to the tubulin family. In terms of assembly, dimer of alpha and beta chains. A typical microtubule is a hollow water-filled tube with an outer diameter of 25 nm and an inner diameter of 15 nM. Alpha-beta heterodimers associate head-to-tail to form protofilaments running lengthwise along the microtubule wall with the beta-tubulin subunit facing the microtubule plus end conferring a structural polarity. Microtubules usually have 13 protofilaments but different protofilament numbers can be found in some organisms and specialized cells. It depends on Mg(2+) as a cofactor. Post-translationally, acetylation of alpha chains at Lys-40 stabilizes microtubules and affects affinity and processivity of microtubule motors. This modification has a role in multiple cellular functions, ranging from cell motility, cell cycle progression or cell differentiation to intracellular trafficking and signaling.

The protein resides in the cytoplasm. The protein localises to the cytoskeleton. It catalyses the reaction GTP + H2O = GDP + phosphate + H(+). Functionally, tubulin is the major constituent of microtubules, a cylinder consisting of laterally associated linear protofilaments composed of alpha- and beta-tubulin heterodimers. Microtubules grow by the addition of GTP-tubulin dimers to the microtubule end, where a stabilizing cap forms. Below the cap, tubulin dimers are in GDP-bound state, owing to GTPase activity of alpha-tubulin. The chain is Tubulin alpha chain from Tyrophagus putrescentiae (Mold mite).